A 256-amino-acid polypeptide reads, in one-letter code: Ribonuclease HII (256 aa).

Positions 73–256 (KLIAGIDEAG…RVSFTKNFIV (184 aa)) constitute an RNase H type-2 domain. A divalent metal cation is bound by residues Asp79, Glu80, and Asp171.

The protein belongs to the RNase HII family. The cofactor is Mn(2+). Mg(2+) serves as cofactor.

It localises to the cytoplasm. The enzyme catalyses Endonucleolytic cleavage to 5'-phosphomonoester.. Its function is as follows. Endonuclease that specifically degrades the RNA of RNA-DNA hybrids. The sequence is that of Ribonuclease HII from Acetivibrio thermocellus (strain ATCC 27405 / DSM 1237 / JCM 9322 / NBRC 103400 / NCIMB 10682 / NRRL B-4536 / VPI 7372) (Clostridium thermocellum).